A 75-amino-acid chain; its full sequence is Translational regulator CsrA (75 aa).

It belongs to the CsrA/RsmA family. As to quaternary structure, homodimer; the beta-strands of each monomer intercalate to form a hydrophobic core, while the alpha-helices form wings that extend away from the core.

It is found in the cytoplasm. A translational regulator that binds mRNA to regulate translation initiation and/or mRNA stability. Usually binds in the 5'-UTR at or near the Shine-Dalgarno sequence preventing ribosome-binding, thus repressing translation. Its main target seems to be the major flagellin gene, while its function is anatagonized by FliW. The protein is Translational regulator CsrA of Exiguobacterium sibiricum (strain DSM 17290 / CCUG 55495 / CIP 109462 / JCM 13490 / 255-15).